The chain runs to 273 residues: Putative pyruvate, phosphate dikinase regulatory protein (273 aa).

153–160 (GISRTSKT) is an ADP binding site.

It belongs to the pyruvate, phosphate/water dikinase regulatory protein family. PDRP subfamily.

It carries out the reaction N(tele)-phospho-L-histidyl/L-threonyl-[pyruvate, phosphate dikinase] + ADP = N(tele)-phospho-L-histidyl/O-phospho-L-threonyl-[pyruvate, phosphate dikinase] + AMP + H(+). The catalysed reaction is N(tele)-phospho-L-histidyl/O-phospho-L-threonyl-[pyruvate, phosphate dikinase] + phosphate + H(+) = N(tele)-phospho-L-histidyl/L-threonyl-[pyruvate, phosphate dikinase] + diphosphate. Bifunctional serine/threonine kinase and phosphorylase involved in the regulation of the pyruvate, phosphate dikinase (PPDK) by catalyzing its phosphorylation/dephosphorylation. This chain is Putative pyruvate, phosphate dikinase regulatory protein, found in Agrobacterium fabrum (strain C58 / ATCC 33970) (Agrobacterium tumefaciens (strain C58)).